A 94-amino-acid chain; its full sequence is Neutrophil defensin 1 (94 aa).

An N-terminal signal peptide occupies residues 1 to 19; that stretch reads MRTLAILAAILLVALQAQA. The propeptide occupies 20–38; that stretch reads EPLQARADEVAAAPEQIAA. Cystine bridges form between Cys66–Cys94, Cys68–Cys83, and Cys73–Cys93. The residue at position 78 (Arg78) is an ADP-ribosylarginine; by ART1. Position 85 is a phosphotyrosine (Tyr85). An ADP-ribosylarginine; by ART1 modification is found at Arg88.

This sequence belongs to the alpha-defensin family. As to quaternary structure, tetramer. Dimer. Interacts with RETN. In terms of assembly, (Microbial infection) Interacts with HIV-1 surface protein gp120. (Microbial infection) Interacts with herpes virus 1 (HHV1) envelope glycoprotein B; this interaction inhibits viral infection. In terms of processing, ADP-ribosylation drastically reduces cytotoxic and antibacterial activities, and enhances IL8 production. Phosphorylation at Tyr-85 has been found in some cancer cell lines, and interferes with ADP-ribosylation.

The protein localises to the secreted. In terms of biological role, effector molecule of the innate immune system that acts via antibiotic-like properties against a broad array of infectious agents including bacteria, fungi, and viruses or by promoting the activation and maturation of some APCs. Interacts with the essential precursor of cell wall synthesis lipid II to inhibit bacterial cell wall synthesis. Inhibits adenovirus infection via inhibition of viral disassembly at the vertex region, thereby restricting the release of internal capsid protein pVI, which is required for endosomal membrane penetration during cell entry. In addition, interaction with adenovirus capsid leads to the redirection of viral particles to TLR4 thereby promoting a NLRP3-mediated inflammasome response and interleukin 1-beta (IL-1beta) release. Induces the production of proinflammatory cytokines including type I interferon (IFN) in plasmacytoid dendritic cells (pDCs) by triggering the degradation of NFKBIA and nuclear translocation of IRF1, both of which are required for activation of pDCs. The sequence is that of Neutrophil defensin 1 (DEFA1) from Homo sapiens (Human).